A 172-amino-acid polypeptide reads, in one-letter code: Protein 3 (172 aa).

This Northern cereal mosaic virus (NCMV) protein is Protein 3 (3).